The following is a 503-amino-acid chain: MEISVTTSIALATIVFFLYKLATRPKSTKKQLPEASRLPIIGHTLHQMVGSLPHRVLKNLADQYGPVMHLQIGELSAIVISSADKAKEVLNTHGVLVADRPQTTVAKIMLYNSLGATFAPYGDYLKQLRQIYALELLSPKTVRSFWTIMEDELSTMVTSVKAEAGQPIVLHDKMLTYLYDTLCRATVGSVCNGRETLIMAARETSALSAAIRIEDLFPSVKILPVISGLKTRLTNLLKQLDTVLEDIIGEREKKMFSSNNQPLTEEEDMLGVLLMYKNGKGKDAKFRITNNDIKAIVWELILAGTLSSAAIVEWCMSEMIKNPRVMKKAQDEVRQVLKDKKTVSGSDLAKLEYVKMVVKESVRLHPPAPLLFPREVREDFEMDGMIIPKKSWVIINYWAVGTDPKTWHDAVKYEPERFSNSSVDFYGSHFELIPFGAGRRICPGILFGTTNVELLLASFLYHFDWKLPGGMKPEELDMNELFGAGCVRENPLCLIPSISVAGN.

The chain crosses the membrane as a helical; Signal-anchor for type II membrane protein span at residues 3 to 23; the sequence is ISVTTSIALATIVFFLYKLAT. Cys-442 contributes to the heme binding site.

Belongs to the cytochrome P450 family. Heme serves as cofactor. In terms of tissue distribution, highly expressed in roots. Expressed at low levels in leaves, stems and flowers.

It localises to the endoplasmic reticulum membrane. It catalyses the reaction (19E)-geissoschizine + reduced [NADPH--hemoprotein reductase] + O2 = polyneuridine aldehyde + oxidized [NADPH--hemoprotein reductase] + 2 H2O + H(+). It carries out the reaction tetrahydroalstonine + A + reduced [NADPH--hemoprotein reductase] + O2 = alstonine + AH2 + oxidized [NADPH--hemoprotein reductase] + 2 H2O + H(+). The catalysed reaction is ajmalicine + A + reduced [NADPH--hemoprotein reductase] + O2 = serpentine + AH2 + oxidized [NADPH--hemoprotein reductase] + 2 H2O + H(+). Its pathway is alkaloid biosynthesis; ajmaline biosynthesis. Monooxygenase involved in the biosynthesis of ajmaline-type monoterpenoid indole alkaloids (MIAs) natural products, important plant-derived pharmaceuticals used in the therapy of heart disorders. Converts by cyclization the strictosidine-derived geissoschizine to the sarpagan alkaloid polyneuridine aldehyde, precursor of vomilenine, an intermediate chemical in the biosynthesis of ajmaline. Converts by aromatization the tetrahydro-beta-carboline alkaloids tetrahydroalstonine and ajmalicine to the corresponding beta-carboline alkaloids alstonine and serpentine, respectively. This is Sarpagan bridge enzyme 1 from Rauvolfia serpentina (Serpentine wood).